Here is a 211-residue protein sequence, read N- to C-terminus: MTDETTKNGPDATAADAAADAAANVEIDNSVQEEAKQPDPLELLKAENAELRDRYLRLAAEMDNLRRRTEREVKDAKSYSVAGFARDMLAVSDNLRRALDAISPEAKATADAGLTTLIEGVEMTERSMLSALERHGVRKLEPVGQKFDPNFHQAMFEVPNSEVPNNTVVQVVQAGFTIGERVLRPAMVGVAKGGPKPVEAEINSVFDEKDA.

The disordered stretch occupies residues 1 to 43; it reads MTDETTKNGPDATAADAAADAAANVEIDNSVQEEAKQPDPLEL. Residues 11-23 show a composition bias toward low complexity; sequence DATAADAAADAAA. Residues 33–43 show a composition bias toward basic and acidic residues; that stretch reads EEAKQPDPLEL.

The protein belongs to the GrpE family. Homodimer.

It is found in the cytoplasm. Participates actively in the response to hyperosmotic and heat shock by preventing the aggregation of stress-denatured proteins, in association with DnaK and GrpE. It is the nucleotide exchange factor for DnaK and may function as a thermosensor. Unfolded proteins bind initially to DnaJ; upon interaction with the DnaJ-bound protein, DnaK hydrolyzes its bound ATP, resulting in the formation of a stable complex. GrpE releases ADP from DnaK; ATP binding to DnaK triggers the release of the substrate protein, thus completing the reaction cycle. Several rounds of ATP-dependent interactions between DnaJ, DnaK and GrpE are required for fully efficient folding. This chain is Protein GrpE, found in Rhizobium etli (strain ATCC 51251 / DSM 11541 / JCM 21823 / NBRC 15573 / CFN 42).